The following is a 326-amino-acid chain: Tetraacyldisaccharide 4'-kinase (326 aa).

Residue 53 to 60 participates in ATP binding; sequence SVGGNGKT.

The protein belongs to the LpxK family.

It catalyses the reaction a lipid A disaccharide + ATP = a lipid IVA + ADP + H(+). The protein operates within glycolipid biosynthesis; lipid IV(A) biosynthesis; lipid IV(A) from (3R)-3-hydroxytetradecanoyl-[acyl-carrier-protein] and UDP-N-acetyl-alpha-D-glucosamine: step 6/6. In terms of biological role, transfers the gamma-phosphate of ATP to the 4'-position of a tetraacyldisaccharide 1-phosphate intermediate (termed DS-1-P) to form tetraacyldisaccharide 1,4'-bis-phosphate (lipid IVA). The polypeptide is Tetraacyldisaccharide 4'-kinase (Actinobacillus pleuropneumoniae serotype 7 (strain AP76)).